A 132-amino-acid chain; its full sequence is Large ribosomal subunit protein uL14 (132 aa).

It belongs to the universal ribosomal protein uL14 family. In terms of assembly, part of the 50S ribosomal subunit. Forms a cluster with proteins L3 and L24e, part of which may contact the 16S rRNA in 2 intersubunit bridges.

Functionally, binds to 23S rRNA. Forms part of two intersubunit bridges in the 70S ribosome. This chain is Large ribosomal subunit protein uL14, found in Methanosarcina barkeri (strain Fusaro / DSM 804).